The primary structure comprises 347 residues: NADH-ubiquinone oxidoreductase chain 2 (347 aa).

Helical transmembrane passes span 3-23 (PPILIIIMFTVISGTIMVLMS), 25-45 (HWLMIWIGFEMNMLAIIPILM), 67-87 (SMLLMLGIIMNLLLTGQWAVL), 150-170 (NPHLLMTMALMSVLVGGWGGL), 178-198 (ILAYSSIAHMGWMIAVMTYSP), 201-221 (MLLNLSIYITMTLGTFMLFMF), 237-257 (LPLITSLILIIMLSLGGLPPL), 274-294 (NMIITTMLMTITALLNLYFYM), and 323-343 (MTMLPPLIVISTMLLPLTPMM).

The protein belongs to the complex I subunit 2 family. Core subunit of respiratory chain NADH dehydrogenase (Complex I) which is composed of 45 different subunits. Interacts with TMEM242.

It localises to the mitochondrion inner membrane. The catalysed reaction is a ubiquinone + NADH + 5 H(+)(in) = a ubiquinol + NAD(+) + 4 H(+)(out). Its function is as follows. Core subunit of the mitochondrial membrane respiratory chain NADH dehydrogenase (Complex I) which catalyzes electron transfer from NADH through the respiratory chain, using ubiquinone as an electron acceptor. Essential for the catalytic activity and assembly of complex I. This is NADH-ubiquinone oxidoreductase chain 2 from Mustela kathiah (Yellow-bellied weasel).